The sequence spans 307 residues: Elongation factor Ts (307 aa).

The interval 80 to 83 is involved in Mg(2+) ion dislocation from EF-Tu; that stretch reads TDFV.

Belongs to the EF-Ts family.

It is found in the cytoplasm. Associates with the EF-Tu.GDP complex and induces the exchange of GDP to GTP. It remains bound to the aminoacyl-tRNA.EF-Tu.GTP complex up to the GTP hydrolysis stage on the ribosome. In Azorhizobium caulinodans (strain ATCC 43989 / DSM 5975 / JCM 20966 / LMG 6465 / NBRC 14845 / NCIMB 13405 / ORS 571), this protein is Elongation factor Ts.